Here is a 528-residue protein sequence, read N- to C-terminus: Coiled-coil domain-containing protein 116 (528 aa).

The interval 43-68 (GHVPHPPSTCGSSALQNQRRNKRHPQ) is disordered. Residues 51–60 (TCGSSALQNQ) show a composition bias toward polar residues. A coiled-coil region spans residues 81-104 (HVLDSLETVVEKATERMAAMKTEA). 2 disordered regions span residues 335–444 (PLFP…RQRA) and 497–528 (SSSP…THHS). Polar residues predominate over residues 363 to 378 (PTNSGQPHPTVSSPKT). Phosphoserine is present on S389. Residues 419–429 (HSREKEPDSDP) show a composition bias toward basic and acidic residues. Over residues 434–443 (PPVSLSSRQR) the composition is skewed to polar residues. Positions 497–510 (SSSPSSLCPEVTSS) are enriched in low complexity.

Its subcellular location is the cytoplasm. It is found in the cytoskeleton. The protein resides in the microtubule organizing center. The protein localises to the centrosome. This chain is Coiled-coil domain-containing protein 116 (CCDC116), found in Macaca fascicularis (Crab-eating macaque).